The primary structure comprises 161 residues: Nucleotide-binding protein Bxeno_A3642 (161 aa).

The protein belongs to the YajQ family.

Functionally, nucleotide-binding protein. The chain is Nucleotide-binding protein Bxeno_A3642 from Paraburkholderia xenovorans (strain LB400).